The following is a 330-amino-acid chain: Small ribosomal subunit protein mS35 (330 aa).

Residues 50 to 73 (AAGKGVRGQMKPRRQAGEPRTERM) form a disordered region. Over residues 64 to 73 (QAGEPRTERM) the composition is skewed to basic and acidic residues.

This sequence belongs to the mitochondrion-specific ribosomal protein mS35 family. Component of the mitochondrial ribosome small subunit (28S) which comprises a 12S rRNA and about 30 distinct proteins.

The protein resides in the mitochondrion. The chain is Small ribosomal subunit protein mS35 (mrps35) from Danio rerio (Zebrafish).